The sequence spans 217 residues: Large ribosomal subunit protein uL4 (217 aa).

It belongs to the universal ribosomal protein uL4 family. In terms of assembly, part of the 50S ribosomal subunit.

Functionally, one of the primary rRNA binding proteins, this protein initially binds near the 5'-end of the 23S rRNA. It is important during the early stages of 50S assembly. It makes multiple contacts with different domains of the 23S rRNA in the assembled 50S subunit and ribosome. Forms part of the polypeptide exit tunnel. This Koribacter versatilis (strain Ellin345) protein is Large ribosomal subunit protein uL4.